We begin with the raw amino-acid sequence, 100 residues long: Large ribosomal subunit protein bL21 (100 aa).

Belongs to the bacterial ribosomal protein bL21 family. In terms of assembly, part of the 50S ribosomal subunit. Contacts protein L20.

Its function is as follows. This protein binds to 23S rRNA in the presence of protein L20. The polypeptide is Large ribosomal subunit protein bL21 (Mycoplasma pneumoniae (strain ATCC 29342 / M129 / Subtype 1) (Mycoplasmoides pneumoniae)).